Consider the following 617-residue polypeptide: Tetratricopeptide repeat protein 39B (617 aa).

TPR repeat units lie at residues 328-361 (SLILFYHARIELLKGNAEKAQETFRKCISVQEEW) and 561-594 (PFTLFELAFLYKSQGEIDKAIKVLETARNNYKDY).

The protein belongs to the TTC39 family.

In terms of biological role, regulates high density lipoprotein (HDL) cholesterol metabolism by promoting the ubiquitination and degradation of the oxysterols receptors LXR (NR1H2 and NR1H3). The protein is Tetratricopeptide repeat protein 39B (Ttc39b) of Rattus norvegicus (Rat).